A 516-amino-acid polypeptide reads, in one-letter code: Homeobox protein 6 (516 aa).

Residues 22–31 show a composition bias toward low complexity; that stretch reads NYDFDNKNNS. Disordered stretches follow at residues 22 to 140, 200 to 256, and 268 to 348; these read NYDF…PNCN, SLNN…SSPS, and DEND…NNGD. Residues 32–41 are compositionally biased toward gly residues; sequence IGGGGGGGGS. Composition is skewed to low complexity over residues 42–59, 66–78, and 101–132; these read SSSRSSSSRSSSNRSSSG, SNSSSSINNIINS, and TTTTTTTTTTTTTTTTTKNENISSSESENSSS. The segment covering 284–346 has biased composition (low complexity); sequence NNNNNNNNNN…NNNNTNTNNN (63 aa). 2 DNA-binding regions (homeobox) span residues 362–421 and 424–483; these read KSGQ…SKSG and SYAK…NKLS. The disordered stretch occupies residues 483–516; the sequence is SSKAIQDKDNQDNDNNNSNNNENNDDSYSDEGLF. Residues 495–504 show a composition bias toward low complexity; that stretch reads NDNNNSNNNE. Residues 505–516 show a composition bias toward acidic residues; the sequence is NNDDSYSDEGLF.

The protein resides in the nucleus. Putative transcription factor. This Dictyostelium discoideum (Social amoeba) protein is Homeobox protein 6 (hbx6).